A 485-amino-acid chain; its full sequence is uncharacterized protein (485 aa).

Its subcellular location is the virion. This is an uncharacterized protein from Acanthamoeba polyphaga mimivirus (APMV).